The following is a 209-amino-acid chain: Ribosomal RNA large subunit methyltransferase E (209 aa).

Residues glycine 63, tryptophan 65, aspartate 83, aspartate 99, and aspartate 124 each coordinate S-adenosyl-L-methionine. Catalysis depends on lysine 164, which acts as the Proton acceptor.

Belongs to the class I-like SAM-binding methyltransferase superfamily. RNA methyltransferase RlmE family.

It is found in the cytoplasm. It catalyses the reaction uridine(2552) in 23S rRNA + S-adenosyl-L-methionine = 2'-O-methyluridine(2552) in 23S rRNA + S-adenosyl-L-homocysteine + H(+). In terms of biological role, specifically methylates the uridine in position 2552 of 23S rRNA at the 2'-O position of the ribose in the fully assembled 50S ribosomal subunit. The protein is Ribosomal RNA large subunit methyltransferase E of Aeromonas salmonicida (strain A449).